The primary structure comprises 366 residues: Flagellar P-ring protein (366 aa).

Positions 1–23 are cleaved as a signal peptide; it reads MRTLKIFALAVSLLSMLAAPVQA.

Belongs to the FlgI family. In terms of assembly, the basal body constitutes a major portion of the flagellar organelle and consists of four rings (L,P,S, and M) mounted on a central rod.

It localises to the periplasm. The protein resides in the bacterial flagellum basal body. In terms of biological role, assembles around the rod to form the L-ring and probably protects the motor/basal body from shearing forces during rotation. The sequence is that of Flagellar P-ring protein from Idiomarina loihiensis (strain ATCC BAA-735 / DSM 15497 / L2-TR).